A 482-amino-acid polypeptide reads, in one-letter code: Reduced viability upon starvation protein 167 (482 aa).

Ser-2 is modified (N-acetylserine). In terms of domain architecture, BAR spans 17 to 254; the sequence is FRQKFKMGEQ…YFDLNSDIVE (238 aa). Coiled coils occupy residues 31–64 and 174–204; these read VYED…NGML and AKDE…LKTQ. Residue Lys-242 forms a Glycyl lysine isopeptide (Lys-Gly) (interchain with G-Cter in ubiquitin) linkage. Phosphoserine; by FUS3 and PHO85 is present on residues Ser-299, Ser-321, and Ser-379. The segment at 382–407 is disordered; that stretch reads LTGLGFQQSPQQQQGPPPAYSNPLTS. The SH3 domain occupies 421–482; sequence PGVETVTALY…PGNYVQLNKN (62 aa). Lys-481 is covalently cross-linked (Glycyl lysine isopeptide (Lys-Gly) (interchain with G-Cter in ubiquitin)).

As to quaternary structure, binds to actin. Interacts with ABP1, GYL1, GYP5, PCL2 and YBR108W. In terms of processing, phosphorylated redundantly by cyclin-dependent kinase PHO85 in association with PCL1,2-type cyclins or by MAP kinase FUS3. Phosphorylation inhibits interaction with complexes involved in actin cytoskeleton function.

The protein resides in the cytoplasm. It localises to the cytoskeleton. In terms of biological role, component of a cytoskeletal structure that is required for the formation of endocytic vesicles at the plasma membrane level. Could be implicated in cytoskeletal reorganization in response to environmental stresses and could act in the budding site selection mechanism. The protein is Reduced viability upon starvation protein 167 (RVS167) of Saccharomyces cerevisiae (strain ATCC 204508 / S288c) (Baker's yeast).